The primary structure comprises 180 residues: Inner membrane-spanning protein YciB (180 aa).

Helical transmembrane passes span 4 to 24 (LLSE…GGGI), 25 to 45 (QHAT…CYVI), 52 to 72 (LSII…ISGN), 76 to 96 (IKIK…MSGI), 118 to 138 (ITLS…NEVV), and 150 to 170 (FKVF…LPLL).

Belongs to the YciB family.

It is found in the cell inner membrane. Plays a role in cell envelope biogenesis, maintenance of cell envelope integrity and membrane homeostasis. The polypeptide is Inner membrane-spanning protein YciB (Rickettsia massiliae (strain Mtu5)).